A 600-amino-acid polypeptide reads, in one-letter code: MSMRTEYCGLVTEHLLGQTVSLCGWVQRRRDHGGVIFIDLRDREGLVQVVCDPDRAEMFATAEGVRNEFCVQIKGLVRNRPEGTVNAGLKSGKIEVLCHELNVLNASVTPPFQLDDDNLSETTRLTHRVLDLRRPQMQHNLRLRYRVAIEARKYLDEQGFIDIETPMLTKSTPEGARDYLVPSRTNAGQFFALPQSPQLFKQLLMVANFDRYYQITKCFRDEDLRADRQPEFTQIDCETSFLGEQEIRDLFEDMIRHIFKTTIDVELDATFPVMPYSEAMARFGSDKPDLRVQLEFTELTDAMKDVDFKVFSTPANAKDGRVAALRVPKGSELSRGDIDGYTEFVRIYGAKGLAWIKVNEKAKGRDGLQSPIVKNLHDASIAAILERTGAEDGDIIFFAADRAKVVNDSLGALRLKIGHSEFGKANGLVHAGWKPLWVVDFPMFEYDDEDARYVAAHHPFTSPKDEHLEYLETDPGRCLAKAYDMVLNGWEIGGGSVRIHREEVQSKVFRALKIGAEEAQLKFGFLLDALQYGAPPHGGIAFGLDRIVTMMAGADSIRDVIAFPKTQRAQDLLTQAPSPVDERQLRELHIRLRQPEQPKA.

Residue Glu-174 participates in L-aspartate binding. An aspartate region spans residues 198–201 (QLFK). Arg-220 is a binding site for L-aspartate. ATP contacts are provided by residues 220 to 222 (RDE) and Gln-229. Residue His-457 coordinates L-aspartate. Glu-491 lines the ATP pocket. Arg-498 lines the L-aspartate pocket. 543-546 (GLDR) provides a ligand contact to ATP.

Belongs to the class-II aminoacyl-tRNA synthetase family. Type 1 subfamily. As to quaternary structure, homodimer.

The protein resides in the cytoplasm. The enzyme catalyses tRNA(Asx) + L-aspartate + ATP = L-aspartyl-tRNA(Asx) + AMP + diphosphate. In terms of biological role, aspartyl-tRNA synthetase with relaxed tRNA specificity since it is able to aspartylate not only its cognate tRNA(Asp) but also tRNA(Asn). Reaction proceeds in two steps: L-aspartate is first activated by ATP to form Asp-AMP and then transferred to the acceptor end of tRNA(Asp/Asn). This is Aspartate--tRNA(Asp/Asn) ligase from Burkholderia lata (strain ATCC 17760 / DSM 23089 / LMG 22485 / NCIMB 9086 / R18194 / 383).